The primary structure comprises 302 residues: MRIVLITGISGSGKSVALNALEDAGYYCVDNLPPHVLPELARYLADGGQHRLAVAIDARSSASLDELPGLIRSLSLEHDVRVLFLNASTQALIQRFSETRRRHPLSGSPSHDANIGLLSSLEEAIERERDLVAPLAEFGHQIDTSTLRANVLRTWVKRFIEQKNNDLMVMFESFGFKRGVPLDADLMFDVRALPNPYYDHELRPLTGLDQPVIAFLDALPIVHQMIDDIHAFLMKWLPHFREDNRSYLTVAIGCTGGQHRSVFIAETLAARLAHDANVIVRHRDAPVDVDASSRLVTEVDRP.

ATP is bound at residue 8–15 (GISGSGKS). Position 57–60 (57–60 (DARS)) interacts with GTP.

Belongs to the RapZ-like family.

Displays ATPase and GTPase activities. This is Nucleotide-binding protein Bamb_2855 from Burkholderia ambifaria (strain ATCC BAA-244 / DSM 16087 / CCUG 44356 / LMG 19182 / AMMD) (Burkholderia cepacia (strain AMMD)).